The chain runs to 391 residues: Somatostatin receptor type 1 (391 aa).

Residues 1 to 50 (MFPNGTASSPSSSPSPSPGSCGEGACSRGPGSGAADGMEEPGRNASQNGT) form a disordered region. Residues 1–56 (MFPNGTASSPSSSPSPSPGSCGEGACSRGPGSGAADGMEEPGRNASQNGTLSEGQG) lie on the Extracellular side of the membrane. A glycan (N-linked (GlcNAc...) asparagine) is linked at Asn-4. Over residues 8–20 (SSPSSSPSPSPGS) the composition is skewed to low complexity. N-linked (GlcNAc...) asparagine glycans are attached at residues Asn-44 and Asn-48. A helical transmembrane segment spans residues 57 to 84 (SAILISFIYSVVCLVGLCGNSMVIYVIL). Residues 85–94 (RYAKMKTATN) are Cytoplasmic-facing. The chain crosses the membrane as a helical span at residues 95-120 (IYILNLAIADELLMLSVPFLVTSTLL). At 121–131 (RHWPFGALLCR) the chain is on the extracellular side. Cysteines 130 and 208 form a disulfide. The helical transmembrane segment at 132–153 (LVLSVDAVNMFTSIYCLTVLSV) threads the bilayer. Residues 154–175 (DRYVAVVHPIKAARYRRPTVAK) lie on the Cytoplasmic side of the membrane. A helical membrane pass occupies residues 176-196 (VVNLGVWVLSLLVILPIVVFS). Over 197–219 (RTAANSDGTVACNMLMPEPAQRW) the chain is Extracellular. The helical transmembrane segment at 220 to 244 (LVGFVLYTFLMGFLLPVGAICLCYV) threads the bilayer. Residues 245–270 (LIIAKMRMVALKAGWQQRKRSERKIT) lie on the Cytoplasmic side of the membrane. The chain crosses the membrane as a helical span at residues 271–296 (LMVMMVVMVFVICWMPFYVVQLVNVF). At 297-303 (AEQDDAT) the chain is on the extracellular side. The chain crosses the membrane as a helical span at residues 304–327 (VSQLSVILGYANSCANPILYGFLS). Residues 328-391 (DNFKRSFQRI…GTCASRISTL (64 aa)) are Cytoplasmic-facing. Residue Cys-339 is the site of S-palmitoyl cysteine attachment.

It belongs to the G-protein coupled receptor 1 family. Jejunum and stomach.

It localises to the cell membrane. In terms of biological role, receptor for somatostatin with higher affinity for somatostatin-14 than -28. This receptor is coupled via pertussis toxin sensitive G proteins to inhibition of adenylyl cyclase. In addition it stimulates phosphotyrosine phosphatase and Na(+)/H(+) exchanger via pertussis toxin insensitive G proteins. The chain is Somatostatin receptor type 1 (Sstr1) from Mus musculus (Mouse).